We begin with the raw amino-acid sequence, 196 residues long: Molybdopterin synthase catalytic subunit (196 aa).

The segment at 1-29 (MSTLPSTDPPPLPASTSSQQPAVHIPPPS) is disordered. Residues 145–146 (HR), Lys161, and 168–170 (KRE) contribute to the substrate site. Residues 174-196 (GEPPGQGEWRANRDTDPEGKSTS) form a disordered region. Positions 183-196 (RANRDTDPEGKSTS) are enriched in basic and acidic residues.

This sequence belongs to the MoaE family. MOCS2B subfamily. Heterotetramer; composed of 2 small (MOCS2A) and 2 large (MOCS2B) subunits.

It is found in the cytoplasm. The catalysed reaction is 2 [molybdopterin-synthase sulfur-carrier protein]-C-terminal-Gly-aminoethanethioate + cyclic pyranopterin phosphate + H2O = molybdopterin + 2 [molybdopterin-synthase sulfur-carrier protein]-C-terminal Gly-Gly + 2 H(+). It participates in cofactor biosynthesis; molybdopterin biosynthesis. Catalytic subunit of the molybdopterin synthase complex, a complex that catalyzes the conversion of precursor Z into molybdopterin. Acts by mediating the incorporation of 2 sulfur atoms from thiocarboxylated MOCS2A into precursor Z to generate a dithiolene group. This Coccidioides immitis (strain RS) (Valley fever fungus) protein is Molybdopterin synthase catalytic subunit.